Consider the following 141-residue polypeptide: Aspartate 1-decarboxylase (141 aa).

The active-site Schiff-base intermediate with substrate; via pyruvic acid is the Ser25. The residue at position 25 (Ser25) is a Pyruvic acid (Ser). Substrate is bound at residue Thr57. Tyr58 acts as the Proton donor in catalysis. 73–75 (GAA) serves as a coordination point for substrate.

It belongs to the PanD family. Heterooctamer of four alpha and four beta subunits. It depends on pyruvate as a cofactor. Post-translationally, is synthesized initially as an inactive proenzyme, which is activated by self-cleavage at a specific serine bond to produce a beta-subunit with a hydroxyl group at its C-terminus and an alpha-subunit with a pyruvoyl group at its N-terminus.

The protein resides in the cytoplasm. It carries out the reaction L-aspartate + H(+) = beta-alanine + CO2. It functions in the pathway cofactor biosynthesis; (R)-pantothenate biosynthesis; beta-alanine from L-aspartate: step 1/1. Functionally, catalyzes the pyruvoyl-dependent decarboxylation of aspartate to produce beta-alanine. This is Aspartate 1-decarboxylase from Pseudarthrobacter chlorophenolicus (strain ATCC 700700 / DSM 12829 / CIP 107037 / JCM 12360 / KCTC 9906 / NCIMB 13794 / A6) (Arthrobacter chlorophenolicus).